Consider the following 345-residue polypeptide: Phosphoribosylformylglycinamidine cyclo-ligase (345 aa).

The protein belongs to the AIR synthase family.

Its subcellular location is the cytoplasm. It carries out the reaction 2-formamido-N(1)-(5-O-phospho-beta-D-ribosyl)acetamidine + ATP = 5-amino-1-(5-phospho-beta-D-ribosyl)imidazole + ADP + phosphate + H(+). It participates in purine metabolism; IMP biosynthesis via de novo pathway; 5-amino-1-(5-phospho-D-ribosyl)imidazole from N(2)-formyl-N(1)-(5-phospho-D-ribosyl)glycinamide: step 2/2. This Shewanella sp. (strain ANA-3) protein is Phosphoribosylformylglycinamidine cyclo-ligase.